We begin with the raw amino-acid sequence, 241 residues long: MGKRLISQRRGRGTPTYRSASHRFKGKIKYRAYDSIESEGSLKGKVVDIMHDPGRTAPVARVKFENGEERLILAPEALMLNEEVECGVKARVKPGNSLPLSEIPEGTPIYNIENRPGDGGKLVRSSGTYASLITHDADKAVIELPSGELKALNPQCRATVGVVAGGGRREKPFLKAGKKYHALRAKGKKSVTVRGVAMNAVDHPHGGGNRQHPGRPTTVSRHAPPGRKVGSIAARRTGKRR.

Residues 1-12 are compositionally biased toward basic residues; sequence MGKRLISQRRGR. Disordered regions lie at residues 1 to 21 and 200 to 241; these read MGKR…RSAS and AVDH…GKRR.

The protein belongs to the universal ribosomal protein uL2 family. In terms of assembly, part of the 50S ribosomal subunit. Forms a bridge to the 30S subunit in the 70S ribosome.

In terms of biological role, one of the primary rRNA binding proteins. Required for association of the 30S and 50S subunits to form the 70S ribosome, for tRNA binding and peptide bond formation. It has been suggested to have peptidyltransferase activity; this is somewhat controversial. Makes several contacts with the 16S rRNA in the 70S ribosome. This is Large ribosomal subunit protein uL2 from Methanothermobacter thermautotrophicus (strain ATCC 29096 / DSM 1053 / JCM 10044 / NBRC 100330 / Delta H) (Methanobacterium thermoautotrophicum).